Here is a 324-residue protein sequence, read N- to C-terminus: Tetrahydromethanopterin:alpha-L-glutamate ligase (324 aa).

The ATP-grasp domain maps to 113–321; the sequence is SYLLARAGLP…PAEYILEYLQ (209 aa). Residues K148, 195 to 204, and R220 contribute to the ATP site; that span reads QEFIENPGRD. D265 contacts Mg(2+). D265 lines the Mn(2+) pocket. A disordered region spans residues 274-293; it reads TGNENKKTEDKSTGQGSRIL. The Mg(2+) site is built by E294 and N296. E294 and N296 together coordinate Mn(2+).

The protein belongs to the RimK family. MptN subfamily. Homodimer. Mg(2+) is required as a cofactor. Requires Mn(2+) as cofactor.

It carries out the reaction 5,6,7,8-tetrahydromethanopterin + L-glutamate + ATP = 5,6,7,8-tetrahydrosarcinapterin + ADP + phosphate + H(+). Its pathway is cofactor biosynthesis; 5,6,7,8-tetrahydrosarcinapterin biosynthesis. Functionally, catalyzes the ATP or GTP-dependent addition of one L-glutamate molecule to tetrahydromethanopterin, producing tetrahydrosarcinapterin. The protein is Tetrahydromethanopterin:alpha-L-glutamate ligase (mptN) of Methanosarcina acetivorans (strain ATCC 35395 / DSM 2834 / JCM 12185 / C2A).